The primary structure comprises 863 residues: MICAL-like protein 1 (863 aa).

The region spanning 2-108 is the Calponin-homology (CH) domain; it reads AGPRGALLAW…YVSQYYNHFC (107 aa). Disordered stretches follow at residues 119 to 162 and 224 to 670; these read RKGL…TPSS and GTRS…PLIK. Pro residues predominate over residues 125-135; that stretch reads CSPPSVAPTPV. Low complexity-rich tracts occupy residues 143 to 159 and 224 to 244; these read GEELSSGSLSEQGTGQT and GTRSGTRPGPFSQPKQQHQQQ. The LIM zinc-binding domain maps to 162–225; it reads STCAACQQHV…EHCARLGPGT (64 aa). 2 positions are modified to phosphoserine: Ser295 and Ser309. Residue Thr318 is modified to Phosphothreonine. Positions 325–340 are enriched in polar residues; that stretch reads LQQENLVEQAGSSSLV. Pro residues predominate over residues 384 to 395; the sequence is APLPPSSSPGPP. A Phosphoserine modification is found at Ser391. An NPF1 motif is present at residues 425–427; sequence NPF. Residues 427 to 438 are compositionally biased toward acidic residues; it reads FEEEEEDKEEEA. Low complexity predominate over residues 439-450; sequence PAAPSLATSPAL. Thr467 and Thr469 each carry phosphothreonine. A phosphoserine mark is found at Ser470, Ser471, Ser484, and Ser486. 3 stretches are compositionally biased toward low complexity: residues 482–495, 505–520, and 553–566; these read APSASPLALHASRL, PSPALSVESLSSESAS, and SLSTNSSLASSGEL. Phosphoserine occurs at positions 578 and 621. An NPF2 motif is present at residues 633–635; that stretch reads NPF. Low complexity predominate over residues 638-656; that stretch reads KPSPAASPATKKATKGSKP. The interval 652-863 is mediates the interaction with RAB13 and RAB35 and intramolecular interaction with the CH domain; sequence KGSKPVRPPA…AKSKSPRDKS (212 aa). Residues 671–818 form the bMERB domain; sequence RKVQADQYIP…EEEEDKMLEA (148 aa). Residues 682 to 711 are a coiled coil; the sequence is EDIHGEMDTIERRLDALEHRGVLLEEKLRG. The interval 700–863 is necessary and sufficient to associate with tubular recycling endosome membranes, mediate phosphatidic acid-binding and membrane tubulation; it reads HRGVLLEEKL…AKSKSPRDKS (164 aa). Ser740 is modified (phosphoserine). Positions 785–830 form a coiled coil; sequence MQELVTLIEQRNAIINCLDEDRQREEEEDKMLEAMIKKKEFQREAE.

As to quaternary structure, homooligomer. Interacts (via NPF1 motif) with EHD1 (via EH domain); the interaction is direct and probably recruits EHD1 to membranes. Interacts with EHD3 (via EH domain). Interacts with RAB35 (GTP-bound form); the interaction is direct and probably recruits MICALL1 to membranes. Interacts with ACAP2; the interaction is indirect through RAB35. Interacts with RAB8A (GTP-bound form); regulates RAB8A association with recycling endosomes. Interacts with RAB13 (GTP-bound form). Interacts with ARF6 (GTP-bound form). Interacts with PACSIN2 (via the SH3 domain). Interacts with DPYSL2.

The protein resides in the recycling endosome membrane. The protein localises to the late endosome membrane. It localises to the cell projection. It is found in the cilium membrane. Its subcellular location is the cytoplasm. The protein resides in the cytoskeleton. The protein localises to the microtubule organizing center. It localises to the centrosome. It is found in the centriole. Lipid-binding protein with higher affinity for phosphatidic acid, a lipid enriched in recycling endosome membranes. On endosome membranes, acts as a downstream effector of Rab proteins recruiting cytosolic proteins to regulate membrane tubulation. Involved in a late step of receptor-mediated endocytosis regulating for instance endocytosed-EGF receptor trafficking. Alternatively, regulates slow endocytic recycling of endocytosed proteins back to the plasma membrane. Also involved in cargo protein delivery to the plasma membrane. Plays a role in ciliogenesis coordination, recruits EHD1 to primary cilium where it is anchored to the centriole through interaction with tubulins. May indirectly play a role in neurite outgrowth. This Homo sapiens (Human) protein is MICAL-like protein 1 (MICALL1).